A 552-amino-acid polypeptide reads, in one-letter code: Membrane protein insertase YidC (552 aa).

Residues 3 to 23 (IKRTVLWVIFFMSAVMLFDNW) traverse the membrane as a helical segment. The disordered stretch occupies residues 36 to 59 (SATPTRTVGSAAPGTTTPGTQPAD). Residues 42 to 59 (TVGSAAPGTTTPGTQPAD) are compositionally biased toward low complexity. 3 consecutive transmembrane segments (helical) span residues 364 to 384 (WGWS…PLSA), 430 to 450 (FGGC…YWVL), and 504 to 524 (MMFM…GLVL).

This sequence belongs to the OXA1/ALB3/YidC family. Type 1 subfamily. In terms of assembly, interacts with the Sec translocase complex via SecD. Specifically interacts with transmembrane segments of nascent integral membrane proteins during membrane integration.

It is found in the cell inner membrane. Its function is as follows. Required for the insertion and/or proper folding and/or complex formation of integral membrane proteins into the membrane. Involved in integration of membrane proteins that insert both dependently and independently of the Sec translocase complex, as well as at least some lipoproteins. Aids folding of multispanning membrane proteins. This Paraburkholderia xenovorans (strain LB400) protein is Membrane protein insertase YidC.